Consider the following 366-residue polypeptide: DNA double-strand break repair protein Mre11 (366 aa).

4 residues coordinate Mn(2+): aspartate 8, histidine 10, aspartate 49, and asparagine 84. The active-site Proton donor is the histidine 85. Residues histidine 158, histidine 186, and histidine 188 each contribute to the Mn(2+) site.

The protein belongs to the MRE11/RAD32 family. Homodimer. Forms a heterotetramer composed of two Mre11 subunits and two Rad50 subunits. Requires Mn(2+) as cofactor.

Its activity is regulated as follows. Nuclease activity is regulated by Rad50. Part of the Rad50/Mre11 complex, which is involved in the early steps of DNA double-strand break (DSB) repair. The complex may facilitate opening of the processed DNA ends to aid in the recruitment of HerA and NurA. Mre11 binds to DSB ends and has both double-stranded 3'-5' exonuclease activity and single-stranded endonuclease activity. This is DNA double-strand break repair protein Mre11 from Methanocaldococcus jannaschii (strain ATCC 43067 / DSM 2661 / JAL-1 / JCM 10045 / NBRC 100440) (Methanococcus jannaschii).